The primary structure comprises 954 residues: Calsyntenin-1 (954 aa).

The N-terminal stretch at 1–25 is a signal peptide; it reads MRIRGVKPFASAVGLLLGLLYAVDA. Topologically, residues 26–833 are extracellular; it reads AKVNKHKPWI…THQASVVPSA (808 aa). 2 Cadherin domains span residues 35 to 151 and 152 to 252; these read IETT…SPVF and KEKS…KPSW. N-linked (GlcNAc...) asparagine glycosylation is found at Asn333, Asn353, and Asn552. A helical transmembrane segment spans residues 834–854; sequence ATIVIVVCVSFLVFMIILGVF. The Cytoplasmic portion of the chain corresponds to 855-954; that stretch reads RIRAAHQRTM…LEWDDSTLTY (100 aa). Residues 891 to 954 form a disordered region; it reads TYEDQHSSEE…LEWDDSTLTY (64 aa). Residues 900–935 are compositionally biased toward acidic residues; the sequence is EEGDEEEEESEDGEEEDDITSAESDSSEDEAGEQED.

The protein belongs to the calsyntenin family. In terms of assembly, homooligomer and heterooligomer; mediates both homophilic and heterophilc interactions with clstn2 and clstn3 paralogs via cadherin domains. As to expression, by 48 hours post-fertilization (hpf), widely expressed in the brain, with strong expression in the telencephalon and the midbrain.

The protein resides in the postsynaptic cell membrane. It localises to the endoplasmic reticulum membrane. Its subcellular location is the golgi apparatus membrane. The protein localises to the cell projection. It is found in the neuron projection. Its function is as follows. Postsynaptic adhesion molecule involved in vesicle trafficking; required for branching of peripheral but not central axons of sensory neurons. Promotes synapse development by acting as a cell adhesion molecule at the postsynaptic membrane, which associates with presynaptic neurexins. This chain is Calsyntenin-1, found in Danio rerio (Zebrafish).